The primary structure comprises 243 residues: 2-C-methyl-D-erythritol 4-phosphate cytidylyltransferase (243 aa).

The protein belongs to the IspD/TarI cytidylyltransferase family. IspD subfamily. As to quaternary structure, homodimer.

The catalysed reaction is 2-C-methyl-D-erythritol 4-phosphate + CTP + H(+) = 4-CDP-2-C-methyl-D-erythritol + diphosphate. It functions in the pathway isoprenoid biosynthesis; isopentenyl diphosphate biosynthesis via DXP pathway; isopentenyl diphosphate from 1-deoxy-D-xylulose 5-phosphate: step 2/6. Catalyzes the formation of 4-diphosphocytidyl-2-C-methyl-D-erythritol from CTP and 2-C-methyl-D-erythritol 4-phosphate (MEP). The protein is 2-C-methyl-D-erythritol 4-phosphate cytidylyltransferase of Photorhabdus laumondii subsp. laumondii (strain DSM 15139 / CIP 105565 / TT01) (Photorhabdus luminescens subsp. laumondii).